A 145-amino-acid chain; its full sequence is Angiogenin-3 (145 aa).

A signal peptide spans 1-24 (MVMSPGSLLLVFLLSLDVIPPTLA). Gln-25 is subject to Pyrrolidone carboxylic acid. His-37 (proton acceptor) is an active-site residue. Cystine bridges form between Cys-50–Cys-104, Cys-63–Cys-115, and Cys-81–Cys-130. The short motif at 55 to 59 (KKRKL) is the Nucleolar localization signal element. Zn(2+) contacts are provided by Glu-65 and His-106. His-137 acts as the Proton donor in catalysis.

The protein belongs to the pancreatic ribonuclease family.

It is found in the cytoplasmic vesicle. The protein resides in the secretory vesicle lumen. Its subcellular location is the secreted. It localises to the nucleus. The protein localises to the nucleolus. Divalent metal ions, such as Cu2+ and Zn2+, may inhibit the ribonucleolytic activity. Has low ribonuclease activity (in vitro). This is Angiogenin-3 (Ang3) from Mus musculus (Mouse).